A 185-amino-acid polypeptide reads, in one-letter code: Elongation factor P (185 aa).

This sequence belongs to the elongation factor P family.

Its subcellular location is the cytoplasm. It functions in the pathway protein biosynthesis; polypeptide chain elongation. Functionally, involved in peptide bond synthesis. Stimulates efficient translation and peptide-bond synthesis on native or reconstituted 70S ribosomes in vitro. Probably functions indirectly by altering the affinity of the ribosome for aminoacyl-tRNA, thus increasing their reactivity as acceptors for peptidyl transferase. The sequence is that of Elongation factor P from Trichormus variabilis (strain ATCC 29413 / PCC 7937) (Anabaena variabilis).